The primary structure comprises 237 residues: Lysophospholipase-like protein 1 (237 aa).

Position 2 is an N-acetylalanine (Ala2). Catalysis depends on charge relay system residues Ser124, Asp179, and His211.

This sequence belongs to the AB hydrolase superfamily. AB hydrolase 2 family.

It is found in the cytoplasm. It localises to the cytosol. The enzyme catalyses S-hexadecanoyl-L-cysteinyl-[protein] + H2O = L-cysteinyl-[protein] + hexadecanoate + H(+). Palmitoyl thioesterase that catalyzes depalmitoylation of CGAS and KCNMA1. Acts as a regulator of innate immunity by mediating depalmitoylation of CGAS, thereby preventing CGAS homodimerization and cyclic GMP-AMP synthase activity. Does not exhibit phospholipase nor triacylglycerol lipase activity, able to hydrolyze only short chain substrates due to its shallow active site. The protein is Lysophospholipase-like protein 1 of Pongo abelii (Sumatran orangutan).